Consider the following 596-residue polypeptide: Bromodomain-containing protein 9 (596 aa).

The span at 1 to 10 (MGKKHKKHKS) shows a compositional bias: basic residues. 2 disordered regions span residues 1 to 31 (MGKK…QYYV) and 49 to 119 (EVTE…SEGE). Positions 61–73 (SFYEDRSDHERER) are enriched in basic and acidic residues. The segment covering 74-84 (HKEKKKKKKKK) has biased composition (basic residues). Residues 85–98 (SEKEKDKYLDEDER) show a composition bias toward basic and acidic residues. Residues 99 to 109 (RRRKEEKKRKR) show a composition bias toward basic residues. A Bromo domain is found at 148-252 (NESTPLQQLL…HTGFKMMSKQ (105 aa)). Positions 226-228 (TYN) are histone H4K5ac H4K8ac and histone H4K5bu H4K8bu binding. The segment covering 537 to 547 (DFHDVHNDRGG) has biased composition (basic and acidic residues). The disordered stretch occupies residues 537–596 (DFHDVHNDRGGSRPSSSSSVSNNSERDHHLGSPSRISVGEQQDIHDPYEFLQSPETENQN). The span at 548–559 (SRPSSSSSVSNN) shows a compositional bias: low complexity.

In terms of assembly, binds acetylated histones H3 and H4. Binds butyrylated histone H4.

The protein resides in the nucleus. In terms of biological role, plays a role in chromatin remodeling and regulation of transcription. Acts as a chromatin reader that recognizes and binds acylated histones: binds histones that are acetylated and/or butyrylated. In Xenopus tropicalis (Western clawed frog), this protein is Bromodomain-containing protein 9 (brd9).